Consider the following 305-residue polypeptide: N-acetylmuramic acid 6-phosphate etherase (305 aa).

Residues 59-222 form the SIS domain; the sequence is TSKALGKGGR…STGVMVKLGK (164 aa). Glutamate 87 acts as the Proton donor in catalysis. Residue glutamate 118 is part of the active site.

This sequence belongs to the GCKR-like family. MurNAc-6-P etherase subfamily. As to quaternary structure, homodimer.

It carries out the reaction N-acetyl-D-muramate 6-phosphate + H2O = N-acetyl-D-glucosamine 6-phosphate + (R)-lactate. It functions in the pathway amino-sugar metabolism; N-acetylmuramate degradation. In terms of biological role, specifically catalyzes the cleavage of the D-lactyl ether substituent of MurNAc 6-phosphate, producing GlcNAc 6-phosphate and D-lactate. This Crocosphaera subtropica (strain ATCC 51142 / BH68) (Cyanothece sp. (strain ATCC 51142)) protein is N-acetylmuramic acid 6-phosphate etherase.